The sequence spans 1226 residues: Methionine synthase (1226 aa).

The Hcy-binding domain occupies Arg-6–Val-326. Zn(2+) is bound by residues Cys-248, Cys-311, and Cys-312. The Pterin-binding domain maps to Phe-357 to Glu-618. The region spanning Ser-651 to Ser-745 is the B12-binding N-terminal domain. Methylcob(III)alamin contacts are provided by residues Glu-695, Gly-757–Asp-761, His-760, Ser-805, Thr-809, and Ala-861. Residues Asn-747–Glu-882 enclose the B12-binding domain. The AdoMet activation domain maps to Lys-898–Gly-1226. S-adenosyl-L-methionine-binding positions include Asp-948, Arg-1136, and Tyr-1191 to Phe-1192.

This sequence belongs to the vitamin-B12 dependent methionine synthase family. The cofactor is methylcob(III)alamin. It depends on Zn(2+) as a cofactor.

It catalyses the reaction (6S)-5-methyl-5,6,7,8-tetrahydrofolate + L-homocysteine = (6S)-5,6,7,8-tetrahydrofolate + L-methionine. The protein operates within amino-acid biosynthesis; L-methionine biosynthesis via de novo pathway; L-methionine from L-homocysteine (MetH route): step 1/1. In terms of biological role, catalyzes the transfer of a methyl group from methyl-cobalamin to homocysteine, yielding enzyme-bound cob(I)alamin and methionine. Subsequently, remethylates the cofactor using methyltetrahydrofolate. This is Methionine synthase (metH) from Vibrio vulnificus (strain YJ016).